A 545-amino-acid chain; its full sequence is 2-succinyl-5-enolpyruvyl-6-hydroxy-3-cyclohexene-1-carboxylate synthase (545 aa).

This sequence belongs to the TPP enzyme family. MenD subfamily. In terms of assembly, homodimer. It depends on Mg(2+) as a cofactor. Mn(2+) is required as a cofactor. Requires thiamine diphosphate as cofactor.

It catalyses the reaction isochorismate + 2-oxoglutarate + H(+) = 5-enolpyruvoyl-6-hydroxy-2-succinyl-cyclohex-3-ene-1-carboxylate + CO2. Its pathway is quinol/quinone metabolism; 1,4-dihydroxy-2-naphthoate biosynthesis; 1,4-dihydroxy-2-naphthoate from chorismate: step 2/7. It participates in quinol/quinone metabolism; menaquinone biosynthesis. In terms of biological role, catalyzes the thiamine diphosphate-dependent decarboxylation of 2-oxoglutarate and the subsequent addition of the resulting succinic semialdehyde-thiamine pyrophosphate anion to isochorismate to yield 2-succinyl-5-enolpyruvyl-6-hydroxy-3-cyclohexene-1-carboxylate (SEPHCHC). This chain is 2-succinyl-5-enolpyruvyl-6-hydroxy-3-cyclohexene-1-carboxylate synthase, found in Nocardia farcinica (strain IFM 10152).